Consider the following 1601-residue polypeptide: Ras guanine nucleotide exchange factor glfB (1601 aa).

Disordered stretches follow at residues 43-140 (PLLA…KEWD), 188-256 (DLLI…TTTT), 310-461 (SPQR…APDS), and 475-630 (LTTT…VKKG). The span at 45–55 (LAPPAPPPPPT) shows a compositional bias: pro residues. Positions 57 to 69 (QEINIGSGNSTFI) are enriched in polar residues. Over residues 70 to 126 (SSNNNNSNNNNNNNSNNNNNNNLNNSNNNNNNLNSNNNNNNNNNNNNNNGNNNNNSN) the composition is skewed to low complexity. S197 is subject to Phosphoserine. T201 is subject to Phosphothreonine. Composition is skewed to low complexity over residues 211 to 256 (QQQQ…TTTT) and 310 to 330 (SPQR…GVVV). Residues 331-359 (ADEESDSSEEESDSSEEESDEYTDEESET) are compositionally biased toward acidic residues. Residues 384 to 398 (PLTSVNSNDNTSSGT) are compositionally biased toward polar residues. Low complexity-rich tracts occupy residues 435–458 (TAVA…TTVA), 475–493 (LTTT…TQSI), and 500–520 (SQQR…AITK). Basic and acidic residues predominate over residues 521–533 (PTKDAKDKKDPAK). Positions 558–577 (VPTGTSPPVSSSTSISSSTG) are enriched in low complexity. The span at 578–596 (IKKDKVKLSKEEKDRIKKE) shows a compositional bias: basic and acidic residues. In terms of domain architecture, Rho-GAP spans 649 to 836 (VRLTQLVLSN…LIIDNYVFLF (188 aa)). One can recognise an N-terminal Ras-GEF domain in the interval 851–983 (GKMIISEGSI…TINDFLKLPK (133 aa)). A Ras-GEF domain is found at 1021–1255 (SAMEIAEQCT…ADLSLKCEPP (235 aa)). The tract at residues 1262-1601 (YNAPADIVDE…QESVPSTNAE (340 aa)) is N-terminal F-actin-binding domain. The tract at residues 1443–1474 (SNVEKEKLSSSQEQQEQQEQKQQEQQQQQQEP) is disordered. Residues 1465-1474 (QEQQQQQQEP) show a composition bias toward low complexity.

As to quaternary structure, interacts with gpaB and rapA. Interacts directly with F-actin. Simultaneously phosphorylated at Ser-197 and Thr-201 after cAMP stimulation.

Its subcellular location is the cytoplasm. The protein resides in the cell cortex. It localises to the cytoskeleton. It is found in the cell projection. The protein localises to the filopodium. Its subcellular location is the lamellipodium. Functionally, gpaB-activated, rapA-specific guanine nucleotide exchange factor, involved in the regulation of the balance between Ras and Rap signaling at the leading edge of chemotaxing cells. Spatially localized activation of Rap and Ras induces F-actin polymerization at the leading edge of chemotaxing cells through the Rac, PI3K, and TORC2 pathways. Also acts as a key regulator of actin-driven membrane protrusions during processes such as phagocytosis and cytokinesis, possibly by modulating rapA signaling pathways. This Dictyostelium discoideum (Social amoeba) protein is Ras guanine nucleotide exchange factor glfB.